Reading from the N-terminus, the 1013-residue chain is Ephrin type-A receptor 5 (1013 aa).

The first 31 residues, 1–31, serve as a signal peptide directing secretion; it reads MGLRGGGGRAGGPAPGWTCLLLCAALRSLLA. Residues 32–549 lie on the Extracellular side of the membrane; the sequence is SPGSEVNLLD…AASSDQSQIP (518 aa). One can recognise an Eph LBD domain in the interval 36 to 214; sequence EVNLLDSRTV…YYKKCPSVIR (179 aa). N-linked (GlcNAc...) asparagine glycosylation is found at Asn-240, Asn-275, Asn-345, Asn-399, Asn-412, and Asn-437. Fibronectin type-III domains follow at residues 333–443 and 444–538; these read PPSA…TNQA and APSP…TSPV. A helical transmembrane segment spans residues 550–570; the sequence is IIVVSVTVGVILLAVVIGFLL. Residues 571–1013 lie on the Cytoplasmic side of the membrane; that stretch reads SGSCCDHGCG…VQLVNGMVPL (443 aa). Phosphotyrosine; by autocatalysis occurs at positions 626 and 632. The 262-residue stretch at 651-912 folds into the Protein kinase domain; the sequence is ITIERVIGAG…EIVSMLDKLI (262 aa). Residues 657–665 and Lys-683 each bind ATP; that span reads IGAGEFGEV. Asp-776 (proton acceptor) is an active-site residue. A phosphotyrosine; by autocatalysis mark is found at Tyr-809 and Tyr-958. An SAM domain is found at 941-1013; that stretch reads GAYRSVGEWL…VQLVNGMVPL (73 aa). The PDZ-binding signature appears at 1011 to 1013; the sequence is VPL.

The protein belongs to the protein kinase superfamily. Tyr protein kinase family. Ephrin receptor subfamily. Heterotetramer upon binding of the ligand. The heterotetramer is composed of an ephrin dimer and a receptor dimer. Oligomerization is probably required to induce biological responses. Phosphorylated. Phosphorylation is stimulated by the ligand EFNA5. As to expression, detected in the 10-day embryonic brain, weaker expression in the rest of the 10-day embryo. Undetected in adult tissues.

It localises to the cell membrane. It is found in the cell projection. The protein localises to the axon. Its subcellular location is the dendrite. It carries out the reaction L-tyrosyl-[protein] + ATP = O-phospho-L-tyrosyl-[protein] + ADP + H(+). Functionally, receptor tyrosine kinase which binds promiscuously GPI-anchored ephrin-A family ligands residing on adjacent cells, leading to contact-dependent bidirectional signaling into neighboring cells. The signaling pathway downstream of the receptor is referred to as forward signaling while the signaling pathway downstream of the ephrin ligand is referred to as reverse signaling. Among GPI-anchored ephrin-A ligands, EFNA5 most probably constitutes the cognate/functional ligand for EPHA5. Functions as an axon guidance molecule during development and may be involved in the development of the retinotectal, entorhino-hippocampal and hippocamposeptal pathways. Together with EFNA5 plays also a role in synaptic plasticity in adult brain through regulation of synaptogenesis. The protein is Ephrin type-A receptor 5 (EPHA5) of Gallus gallus (Chicken).